Consider the following 488-residue polypeptide: Protein nucleotidyltransferase YdiU (488 aa).

Positions 91, 93, 94, 114, 126, 127, 177, and 184 each coordinate ATP. Aspartate 253 acts as the Proton acceptor in catalysis. Mg(2+)-binding residues include asparagine 254 and aspartate 263. Aspartate 263 contributes to the ATP binding site.

Belongs to the SELO family. The cofactor is Mg(2+). Mn(2+) serves as cofactor.

It catalyses the reaction L-seryl-[protein] + ATP = 3-O-(5'-adenylyl)-L-seryl-[protein] + diphosphate. It carries out the reaction L-threonyl-[protein] + ATP = 3-O-(5'-adenylyl)-L-threonyl-[protein] + diphosphate. The enzyme catalyses L-tyrosyl-[protein] + ATP = O-(5'-adenylyl)-L-tyrosyl-[protein] + diphosphate. The catalysed reaction is L-histidyl-[protein] + UTP = N(tele)-(5'-uridylyl)-L-histidyl-[protein] + diphosphate. It catalyses the reaction L-seryl-[protein] + UTP = O-(5'-uridylyl)-L-seryl-[protein] + diphosphate. It carries out the reaction L-tyrosyl-[protein] + UTP = O-(5'-uridylyl)-L-tyrosyl-[protein] + diphosphate. Functionally, nucleotidyltransferase involved in the post-translational modification of proteins. It can catalyze the addition of adenosine monophosphate (AMP) or uridine monophosphate (UMP) to a protein, resulting in modifications known as AMPylation and UMPylation. The protein is Protein nucleotidyltransferase YdiU of Bacillus cereus (strain G9842).